A 62-amino-acid chain; its full sequence is Large ribosomal subunit protein bL32 (62 aa).

The protein belongs to the bacterial ribosomal protein bL32 family.

The protein is Large ribosomal subunit protein bL32 of Treponema denticola (strain ATCC 35405 / DSM 14222 / CIP 103919 / JCM 8153 / KCTC 15104).